The following is a 323-amino-acid chain: Flavone synthase cfoJ (323 aa).

Requires FMN as cofactor.

It functions in the pathway secondary metabolite biosynthesis; flavonoid biosynthesis. FMN-dependent oxidoreductase; part of the gene cluster that mediates the biosynthesis of chlorflavonin, a fungal flavonoid with acetolactate synthase inhibitory activity. Within the pathway, cfoJ acts as a flavone synthase (FNS) and catalyzes the formation of a double bond between C2 and C3, converting the flavanone into a flavone. The pathway begins with the PKS-NRPS hybrid synthetase cfoA that uses benzoic acid or p-hydroxybenzoic acid as a starter unit with four rounds of chain elongation using malonyl-CoA to form the chalcone skeleton. Then, a new type of chalcone isomerase, cfoK, catalyzes the conversion of the chalcone into a flavanone by a histidine-mediated oxa-Michael addition mechanism. The desaturation of flavanone to flavone is catalyzed by a new type of flavone synthase, the flavin mononucleotide (FMN)-dependent oxidoreductase cfoJ. Monooxygenases cfoF, cfoG, and P450 cfoH are responsible for the hydroxylation of the flavonoid skeleton at sites C3, C8, and C2', respectively. Like cfoF, the dehydratase cfoI plays also a role in the hydroxylation of position C3. Methyltransferases cfoB, cfoC, and cfoD then catalyze the methylation of C7-OH, C8-OH, and C3-OH, respectively. Finally, the monooxygenase cfoE is responsible for the chlorination of flavonoid at position C3'. The polypeptide is Flavone synthase cfoJ (Aspergillus candidus).